The primary structure comprises 1407 residues: DNA-directed RNA polymerase subunit beta' (1407 aa).

Residues Cys70, Cys72, Cys85, and Cys88 each contribute to the Zn(2+) site. Residues Asp460, Asp462, and Asp464 each contribute to the Mg(2+) site. Zn(2+)-binding residues include Cys814, Cys888, Cys895, and Cys898.

This sequence belongs to the RNA polymerase beta' chain family. In terms of assembly, the RNAP catalytic core consists of 2 alpha, 1 beta, 1 beta' and 1 omega subunit. When a sigma factor is associated with the core the holoenzyme is formed, which can initiate transcription. The cofactor is Mg(2+). Zn(2+) is required as a cofactor.

The enzyme catalyses RNA(n) + a ribonucleoside 5'-triphosphate = RNA(n+1) + diphosphate. In terms of biological role, DNA-dependent RNA polymerase catalyzes the transcription of DNA into RNA using the four ribonucleoside triphosphates as substrates. This Cronobacter sakazakii (strain ATCC BAA-894) (Enterobacter sakazakii) protein is DNA-directed RNA polymerase subunit beta'.